We begin with the raw amino-acid sequence, 1135 residues long: Exportin-6-A (1135 aa).

An Importin N-terminal domain is found at 31–97 (IESLLNNFAQ…RNSLPKLLLS (67 aa)).

The protein belongs to the exportin family. As to expression, expressed during meiotic maturation 2 hours after germinal vesicle break down (GVBD) and in unfertilized and fertilized eggs, but not in oocytes (at protein level). Expressed in somatic cells, in oocytes, during meiotic maturation and in unfertilized and fertilized eggs.

The protein resides in the nucleus. It localises to the cytoplasm. Its function is as follows. Mediates the nuclear export of actin and profilin-actin complexes in somatic cells. Oocyte nuclei lack active actin export. This chain is Exportin-6-A (xpo6-a), found in Xenopus laevis (African clawed frog).